The sequence spans 247 residues: tRNA uridine(34) hydroxylase (247 aa).

In terms of domain architecture, Rhodanese spans 124–218 (TQQDVIVIDT…YLEDTQNKNN (95 aa)). The active-site Cysteine persulfide intermediate is cysteine 178.

Belongs to the TrhO family.

It carries out the reaction uridine(34) in tRNA + AH2 + O2 = 5-hydroxyuridine(34) in tRNA + A + H2O. Functionally, catalyzes oxygen-dependent 5-hydroxyuridine (ho5U) modification at position 34 in tRNAs. This chain is tRNA uridine(34) hydroxylase, found in Rickettsia conorii (strain ATCC VR-613 / Malish 7).